Consider the following 459-residue polypeptide: NADH-ubiquinone oxidoreductase chain 4 (459 aa).

Helical transmembrane passes span 22 to 42 (MIWI…LLFF), 60 to 80 (PLTT…IMAS), 94 to 112 (LYLS…TFTA), 113 to 133 (TELI…LVII), 145 to 165 (AGTY…IALI), 196 to 216 (WLAY…HLWL), 224 to 244 (PIAG…YGMM), 257 to 277 (MAYP…SISL), 284 to 303 (SLIA…AILI), 308 to 330 (SFTG…FCLA), 351 to 371 (LLPL…ALPP), 391 to 411 (TTLL…LYMF), and 435 to 455 (ILMF…DIIT).

Belongs to the complex I subunit 4 family. As to quaternary structure, core subunit of respiratory chain NADH dehydrogenase (Complex I) which is composed of 45 different subunits.

It is found in the mitochondrion inner membrane. The enzyme catalyses a ubiquinone + NADH + 5 H(+)(in) = a ubiquinol + NAD(+) + 4 H(+)(out). Core subunit of the mitochondrial membrane respiratory chain NADH dehydrogenase (Complex I) which catalyzes electron transfer from NADH through the respiratory chain, using ubiquinone as an electron acceptor. Essential for the catalytic activity and assembly of complex I. This Gorilla gorilla gorilla (Western lowland gorilla) protein is NADH-ubiquinone oxidoreductase chain 4 (MT-ND4).